A 271-amino-acid polypeptide reads, in one-letter code: 4-hydroxy-tetrahydrodipicolinate reductase (271 aa).

Residues 10 to 15, glutamate 36, 100 to 102, and 124 to 127 contribute to the NAD(+) site; these read GAGGRM, GTT, and SGNM. The Proton donor/acceptor role is filled by histidine 157. Histidine 158 lines the (S)-2,3,4,5-tetrahydrodipicolinate pocket. Lysine 161 (proton donor) is an active-site residue. 167 to 168 is a (S)-2,3,4,5-tetrahydrodipicolinate binding site; the sequence is GT.

Belongs to the DapB family.

It localises to the cytoplasm. It catalyses the reaction (S)-2,3,4,5-tetrahydrodipicolinate + NAD(+) + H2O = (2S,4S)-4-hydroxy-2,3,4,5-tetrahydrodipicolinate + NADH + H(+). It carries out the reaction (S)-2,3,4,5-tetrahydrodipicolinate + NADP(+) + H2O = (2S,4S)-4-hydroxy-2,3,4,5-tetrahydrodipicolinate + NADPH + H(+). Its pathway is amino-acid biosynthesis; L-lysine biosynthesis via DAP pathway; (S)-tetrahydrodipicolinate from L-aspartate: step 4/4. Functionally, catalyzes the conversion of 4-hydroxy-tetrahydrodipicolinate (HTPA) to tetrahydrodipicolinate. The protein is 4-hydroxy-tetrahydrodipicolinate reductase of Rhodopseudomonas palustris (strain BisB5).